The chain runs to 134 residues: Small ribosomal subunit protein uS9 (134 aa).

The disordered stretch occupies residues 109–134; that stretch reads DARRTEPHKPSKSSKGPRARRQKSYR. Residues 118 to 134 show a composition bias toward basic residues; that stretch reads PSKSSKGPRARRQKSYR.

It belongs to the universal ribosomal protein uS9 family.

In Methanococcus vannielii (strain ATCC 35089 / DSM 1224 / JCM 13029 / OCM 148 / SB), this protein is Small ribosomal subunit protein uS9.